Consider the following 436-residue polypeptide: GTPase Der (436 aa).

EngA-type G domains lie at 4–167 (PTIA…PEQQ) and 176–351 (IKFS…ENHR). GTP-binding positions include 10-17 (GRANVGKS), 57-61 (DTGGI), 119-122 (NKID), 182-189 (GRPNVGKS), 229-233 (DTAGM), and 294-297 (NKWD). The 85-residue stretch at 352 to 436 (KRVQSSTLNE…PLHLIARKRN (85 aa)) folds into the KH-like domain.

Belongs to the TRAFAC class TrmE-Era-EngA-EngB-Septin-like GTPase superfamily. EngA (Der) GTPase family. Associates with the 50S ribosomal subunit.

Its function is as follows. GTPase that plays an essential role in the late steps of ribosome biogenesis. In Macrococcus caseolyticus (strain JCSC5402) (Macrococcoides caseolyticum), this protein is GTPase Der.